The chain runs to 150 residues: UPF0336 protein SGR_2883 (150 aa).

In terms of domain architecture, MaoC-like spans arginine 10–alanine 116.

The protein belongs to the UPF0336 family.

The protein is UPF0336 protein SGR_2883 of Streptomyces griseus subsp. griseus (strain JCM 4626 / CBS 651.72 / NBRC 13350 / KCC S-0626 / ISP 5235).